A 543-amino-acid polypeptide reads, in one-letter code: Chaperonin GroEL (543 aa).

Residues 29–32 (TLGP), Lys-50, 86–90 (DGTTT), Gly-413, 480–482 (NAA), and Asp-496 contribute to the ATP site. The segment at 524 to 543 (EKPEKKESTPASAGAGDMDF) is disordered.

This sequence belongs to the chaperonin (HSP60) family. As to quaternary structure, forms a cylinder of 14 subunits composed of two heptameric rings stacked back-to-back. Interacts with the co-chaperonin GroES.

It is found in the cytoplasm. The catalysed reaction is ATP + H2O + a folded polypeptide = ADP + phosphate + an unfolded polypeptide.. Its function is as follows. Together with its co-chaperonin GroES, plays an essential role in assisting protein folding. The GroEL-GroES system forms a nano-cage that allows encapsulation of the non-native substrate proteins and provides a physical environment optimized to promote and accelerate protein folding. The protein is Chaperonin GroEL of Thermus thermophilus (strain ATCC BAA-163 / DSM 7039 / HB27).